We begin with the raw amino-acid sequence, 193 residues long: Flagellar transcriptional regulator FlhC (193 aa).

Positions 138, 141, 158, and 161 each coordinate Zn(2+).

It belongs to the FlhC family. Heterohexamer composed of two FlhC and four FlhD subunits. Each FlhC binds a FlhD dimer, forming a heterotrimer, and a hexamer assembles by dimerization of two heterotrimers. Zn(2+) is required as a cofactor.

Its subcellular location is the cytoplasm. Functionally, functions in complex with FlhD as a master transcriptional regulator that regulates transcription of several flagellar and non-flagellar operons by binding to their promoter region. Activates expression of class 2 flagellar genes, including fliA, which is a flagellum-specific sigma factor that turns on the class 3 genes. Also regulates genes whose products function in a variety of physiological pathways. The protein is Flagellar transcriptional regulator FlhC of Yersinia enterocolitica.